Consider the following 527-residue polypeptide: Glucose-6-phosphate isomerase (527 aa).

Glu323 (proton donor) is an active-site residue. Residues His352 and Lys454 contribute to the active site.

The protein belongs to the GPI family.

It localises to the cytoplasm. It catalyses the reaction alpha-D-glucose 6-phosphate = beta-D-fructose 6-phosphate. The protein operates within carbohydrate biosynthesis; gluconeogenesis. Its pathway is carbohydrate degradation; glycolysis; D-glyceraldehyde 3-phosphate and glycerone phosphate from D-glucose: step 2/4. Its function is as follows. Catalyzes the reversible isomerization of glucose-6-phosphate to fructose-6-phosphate. The sequence is that of Glucose-6-phosphate isomerase from Prochlorococcus marinus (strain MIT 9312).